We begin with the raw amino-acid sequence, 346 residues long: 2-oxoglutarate synthase subunit KorA (346 aa).

As to quaternary structure, heterotetramer of the KorA, KorB, KorC and KorD subunits.

The enzyme catalyses 2 oxidized [2Fe-2S]-[ferredoxin] + 2-oxoglutarate + CoA = succinyl-CoA + 2 reduced [2Fe-2S]-[ferredoxin] + CO2 + H(+). In Archaeoglobus fulgidus (strain ATCC 49558 / DSM 4304 / JCM 9628 / NBRC 100126 / VC-16), this protein is 2-oxoglutarate synthase subunit KorA (korA).